Consider the following 409-residue polypeptide: Probable beta-1,3-galactosyltransferase 3 (409 aa).

The chain crosses the membrane as a helical; Signal-anchor for type II membrane protein span at residues 20–42 (WTFLLCFGSFCFGILFTDRMWII).

It belongs to the glycosyltransferase 31 family. It depends on Mn(2+) as a cofactor.

The protein localises to the golgi apparatus membrane. Its pathway is protein modification; protein glycosylation. Its function is as follows. Beta-1,3-galactosyltransferase that transfers galactose from UDP-galactose to substrates with a terminal glycosyl residue. The sequence is that of Probable beta-1,3-galactosyltransferase 3 (B3GALT3) from Arabidopsis thaliana (Mouse-ear cress).